We begin with the raw amino-acid sequence, 151 residues long: Protein A151R (151 aa).

Zn(2+) is bound by residues H102, C109, C132, and C135. The short motif at 131 to 135 is the Thioredoxin WCTKC motif element; it reads WCTKC.

It belongs to the asfivirus A151R family. In terms of assembly, monomer. Homodimer. Interacts with protein B119L. Interacts with membrane protein E248R. Zn(2+) is required as a cofactor.

May participate in a redox cascade for the formation of disulfide bonds in viral proteins. The sequence is that of Protein A151R from African swine fever virus (strain Badajoz 1971 Vero-adapted) (Ba71V).